Here is an 808-residue protein sequence, read N- to C-terminus: DNA replication licensing factor MCM3 (808 aa).

An N-acetylalanine modification is found at Ala-2. 2 positions are modified to phosphoserine: Ser-160 and Ser-275. An N6-acetyllysine modification is found at Lys-293. Residues 295–502 (IFDQLARSLA…QDREISDHVL (208 aa)) form the MCM domain. ADP-binding residues include Gln-353, Leu-393, Glu-394, Ala-395, and Ala-397. The Arginine finger signature appears at 477-480 (SRFD). Residue Ala-523 coordinates ATP. Ser-535 is subject to Phosphoserine; by ATM. N6-acetyllysine is present on Lys-547. Ser-611 carries the post-translational modification Phosphoserine. The interval 662–739 (KKRKKRSEDE…ETKESQKVEL (78 aa)) is disordered. Position 664 (Arg-664) interacts with ATP. Phosphoserine occurs at positions 668, 672, and 681. Basic and acidic residues predominate over residues 679–688 (EKSQEDQEQK). The residue at position 708 (Tyr-708) is a Phosphotyrosine. A phosphothreonine mark is found at Thr-713 and Thr-722. Over residues 727 to 739 (DSQETKESQKVEL) the composition is skewed to basic and acidic residues. Ser-728 and Ser-734 each carry phosphoserine.

Belongs to the MCM family. In terms of assembly, component of the MCM2-7 complex. The complex forms a toroidal hexameric ring with the proposed subunit order MCM2-MCM6-MCM4-MCM7-MCM3-MCM5. Component of the CMG helicase complex, a hexameric ring of related MCM2-7 subunits stabilized by CDC45 and the tetrameric GINS complex. Associated with the replication-specific DNA polymerase alpha. Interacts with MCMBP. Interacts with ANKRD17. Interacts with MCM3AP isoform MCM3AP; this interaction leads to MCM3 acetylation. In terms of processing, acetylated by MCM3AP. O-glycosylated (O-GlcNAcylated), in a cell cycle-dependent manner.

It localises to the nucleus. Its subcellular location is the chromosome. It catalyses the reaction ATP + H2O = ADP + phosphate + H(+). Its function is as follows. Acts as a component of the MCM2-7 complex (MCM complex) which is the replicative helicase essential for 'once per cell cycle' DNA replication initiation and elongation in eukaryotic cells. Core component of CDC45-MCM-GINS (CMG) helicase, the molecular machine that unwinds template DNA during replication, and around which the replisome is built. The active ATPase sites in the MCM2-7 ring are formed through the interaction surfaces of two neighboring subunits such that a critical structure of a conserved arginine finger motif is provided in trans relative to the ATP-binding site of the Walker A box of the adjacent subunit. The six ATPase active sites, however, are likely to contribute differentially to the complex helicase activity. Required for the entry in S phase and for cell division. In Bos taurus (Bovine), this protein is DNA replication licensing factor MCM3 (MCM3).